The chain runs to 399 residues: Galactokinase (399 aa).

Position 42–45 (42–45 (EHTD)) interacts with substrate. ATP-binding positions include Ser76 and 133-139 (ASGLSSS). Residues Ser139 and Glu171 each contribute to the Mg(2+) site. Asp183 serves as the catalytic Proton acceptor. A substrate-binding site is contributed by Tyr233.

The protein belongs to the GHMP kinase family. GalK subfamily.

The protein localises to the cytoplasm. The catalysed reaction is alpha-D-galactose + ATP = alpha-D-galactose 1-phosphate + ADP + H(+). The protein operates within carbohydrate metabolism; galactose metabolism. Catalyzes the transfer of the gamma-phosphate of ATP to D-galactose to form alpha-D-galactose-1-phosphate (Gal-1-P). This chain is Galactokinase, found in Lactococcus lactis subsp. cremoris (strain MG1363).